The chain runs to 210 residues: Large ribosomal subunit protein uL3 (210 aa).

It belongs to the universal ribosomal protein uL3 family. Part of the 50S ribosomal subunit. Forms a cluster with proteins L14 and L19.

Functionally, one of the primary rRNA binding proteins, it binds directly near the 3'-end of the 23S rRNA, where it nucleates assembly of the 50S subunit. The polypeptide is Large ribosomal subunit protein uL3 (Amoebophilus asiaticus (strain 5a2)).